A 328-amino-acid chain; its full sequence is UPF0285 protein MJ1370 (328 aa).

This sequence belongs to the UPF0285 family.

The sequence is that of UPF0285 protein MJ1370 from Methanocaldococcus jannaschii (strain ATCC 43067 / DSM 2661 / JAL-1 / JCM 10045 / NBRC 100440) (Methanococcus jannaschii).